Consider the following 155-residue polypeptide: MKILVDADGCPVKDIILKIAKKYHIKVVMVKNICHELHDDYAEIITVDQGRDVADITLINHTEKGDIVITQDYGVAAMALAKNAHAIHQNGWAYTDENIDELLMKRHMGQEIRRKHKKYTKIPKRTKEDDLQFERFLIHYLDENILKIRGHQDEI.

This sequence belongs to the UPF0178 family.

The protein is UPF0178 protein Clos_2709 of Alkaliphilus oremlandii (strain OhILAs) (Clostridium oremlandii (strain OhILAs)).